The chain runs to 623 residues: Arginine decarboxylase 2 (623 aa).

Residue Lys-109 is modified to N6-(pyridoxal phosphate)lysine. Position 295–305 (Leu-295–Tyr-305) interacts with substrate.

Belongs to the Orn/Lys/Arg decarboxylase class-II family. SpeA subfamily. Pyridoxal 5'-phosphate serves as cofactor. Requires Mg(2+) as cofactor. In terms of tissue distribution, expressed in stems (at protein level).

The enzyme catalyses L-arginine + H(+) = agmatine + CO2. It participates in amine and polyamine biosynthesis; agmatine biosynthesis; agmatine from L-arginine: step 1/1. The polypeptide is Arginine decarboxylase 2 (ADC2) (Oryza sativa subsp. japonica (Rice)).